A 647-amino-acid chain; its full sequence is Cartilage acidic protein 1 (647 aa).

An N-terminal signal peptide occupies residues 1 to 30 (MMLPADFFVPVSKMMLLALLLSIIICCGGA). Residues 48-90 (DYDSNPTQLNYGVAITDVDNDGDFEVVVAGYNGPNLVLKYIKE) form an FG-GAP 1; atypical repeat. Residues 107–149 (YALRDRQGNAIGVAACDIDGDGREEIYFLNTNNAFSGIATYSD) form an FG-GAP 2; atypical repeat. The stretch at 285–335 (TGVDDVYQHGRGVALADFNRDGKVDIVYGNWNGPHRLFLQMNTNGKVRFRD) is one FG-GAP 3; atypical repeat. The FG-GAP 4; atypical repeat unit spans residues 397 to 439 (GDASEPDGRGTGGAVTDFDGDGMLDLILSHGESMAQPLSVFKG). Residues 561-607 (DTDECIQFPFVCPREKPVCINTYGGYKCRPNRRCSRGFEPNEDGTAC) enclose the EGF-like domain. 3 cysteine pairs are disulfide-bonded: cysteine 565–cysteine 579, cysteine 572–cysteine 588, and cysteine 594–cysteine 607.

The protein localises to the secreted. The protein resides in the extracellular space. It localises to the extracellular matrix. This Xenopus tropicalis (Western clawed frog) protein is Cartilage acidic protein 1 (crtac1).